Here is a 200-residue protein sequence, read N- to C-terminus: Polyadenylate-binding protein 1-like 2 (200 aa).

RRM domains follow at residues 2–80 (ASLY…WSQR) and 90–166 (GNVF…RFKS). Residues 170–200 (REAERGAWARQSTSADVKDFEEDTDEEATLR) are disordered. Acidic residues predominate over residues 188–200 (DFEEDTDEEATLR).

This Homo sapiens (Human) protein is Polyadenylate-binding protein 1-like 2 (PABPC1L2A).